Consider the following 540-residue polypeptide: Chaperonin GroEL 2/3 (540 aa).

Residues 30 to 33, K51, 87 to 91, G415, 479 to 481, and D495 contribute to the ATP site; these read TLGP, DGTTT, and NAA.

Belongs to the chaperonin (HSP60) family. As to quaternary structure, forms a cylinder of 14 subunits composed of two heptameric rings stacked back-to-back. Interacts with the co-chaperonin GroES.

It is found in the cytoplasm. The enzyme catalyses ATP + H2O + a folded polypeptide = ADP + phosphate + an unfolded polypeptide.. Together with its co-chaperonin GroES, plays an essential role in assisting protein folding. The GroEL-GroES system forms a nano-cage that allows encapsulation of the non-native substrate proteins and provides a physical environment optimized to promote and accelerate protein folding. The polypeptide is Chaperonin GroEL 2/3 (Paraburkholderia xenovorans (strain LB400)).